The following is a 148-amino-acid chain: Probable transporter PD_1893 (148 aa).

4 helical membrane passes run 11 to 31 (FTVALAAGLLFGFGLALSEMI), 48 to 68 (NPSLLFVLGSALAVAFPGMAL), 93 to 113 (IVFGSAIFGTGWGLTGLCPGP), and 118 to 138 (LSTGLGSVLLFVAAMAAGMII).

The protein belongs to the TsuA/YedE (TC 9.B.102) family.

The protein localises to the cell inner membrane. This chain is Probable transporter PD_1893, found in Xylella fastidiosa (strain Temecula1 / ATCC 700964).